The primary structure comprises 495 residues: Probable plastidic glucose transporter 3 (495 aa).

The next 12 membrane-spanning stretches (helical) occupy residues 55–75 (LPHVLVASLTSLLFGYHLGVV), 97–117 (LVVSTCLGGAFIGSLFSGLVA), 131–151 (LPMIVGASVSASTESLMGMLL), 154–174 (FLVGIGMGIGPSVTALYVTEV), 183–203 (YGSSTQIATCIGLLGSLFAGI), 214–234 (ICFWISTVPAAMLAVFMELCV), 294–314 (VVFIGSTLFALQQLSGINAVF), 330–350 (SANICVGVCNLLGSTVAVVLM), 357–377 (VLLIGSFAGMAVSLGLQAIAY), 384–404 (FGTLFLSVGGMLLFVLSFATG), 425–445 (ALAVCLAVHWVINFFVGLLFL), and 451–471 (LGSVLLNAIFGFFCVVAVIFV).

This sequence belongs to the major facilitator superfamily. Sugar transporter (TC 2.A.1.1) family.

It is found in the plastid. The protein resides in the chloroplast membrane. Its function is as follows. May be involved in the efflux of glucose towards the cytosol. The protein is Probable plastidic glucose transporter 3 of Arabidopsis thaliana (Mouse-ear cress).